A 215-amino-acid chain; its full sequence is Pyridoxine/pyridoxamine 5'-phosphate oxidase (215 aa).

Substrate contacts are provided by residues 9–12 (RRDY) and Lys-69. FMN-binding positions include 64 to 69 (RVLLLK), 79 to 80 (FT), Lys-86, and Gln-108. Residues Tyr-126, Arg-130, and Ser-134 each contribute to the substrate site. Residues 143-144 (QS) and Trp-188 contribute to the FMN site. 194–196 (RLH) is a binding site for substrate. FMN is bound at residue Arg-198.

It belongs to the pyridoxamine 5'-phosphate oxidase family. In terms of assembly, homodimer. FMN serves as cofactor.

It catalyses the reaction pyridoxamine 5'-phosphate + O2 + H2O = pyridoxal 5'-phosphate + H2O2 + NH4(+). It carries out the reaction pyridoxine 5'-phosphate + O2 = pyridoxal 5'-phosphate + H2O2. It functions in the pathway cofactor metabolism; pyridoxal 5'-phosphate salvage; pyridoxal 5'-phosphate from pyridoxamine 5'-phosphate: step 1/1. It participates in cofactor metabolism; pyridoxal 5'-phosphate salvage; pyridoxal 5'-phosphate from pyridoxine 5'-phosphate: step 1/1. In terms of biological role, catalyzes the oxidation of either pyridoxine 5'-phosphate (PNP) or pyridoxamine 5'-phosphate (PMP) into pyridoxal 5'-phosphate (PLP). This chain is Pyridoxine/pyridoxamine 5'-phosphate oxidase, found in Pseudomonas syringae pv. syringae (strain B728a).